The primary structure comprises 171 residues: Ribosome maturation factor RimP (171 aa).

The protein belongs to the RimP family.

The protein localises to the cytoplasm. Its function is as follows. Required for maturation of 30S ribosomal subunits. The protein is Ribosome maturation factor RimP of Oleidesulfovibrio alaskensis (strain ATCC BAA-1058 / DSM 17464 / G20) (Desulfovibrio alaskensis).